The chain runs to 525 residues: D-arabinono-1,4-lactone oxidase (525 aa).

The region spanning I20–A195 is the FAD-binding PCMH-type domain. Position 58 is a pros-8alpha-FAD histidine (H58).

Belongs to the oxygen-dependent FAD-linked oxidoreductase family. FAD is required as a cofactor.

The protein resides in the mitochondrion membrane. The enzyme catalyses D-arabinono-1,4-lactone + O2 = dehydro-D-arabinono-1,4-lactone + H2O2 + H(+). It participates in cofactor biosynthesis; D-erythroascorbate biosynthesis; dehydro-D-arabinono-1,4-lactone from D-arabinose: step 2/2. The sequence is that of D-arabinono-1,4-lactone oxidase (ALO1) from Candida glabrata (strain ATCC 2001 / BCRC 20586 / JCM 3761 / NBRC 0622 / NRRL Y-65 / CBS 138) (Yeast).